Consider the following 211-residue polypeptide: Urease accessory protein UreF (211 aa).

The interval 71 to 93 (DDADRETDARTPAPAARHASRSQ) is disordered.

The protein belongs to the UreF family. UreD, UreF and UreG form a complex that acts as a GTP-hydrolysis-dependent molecular chaperone, activating the urease apoprotein by helping to assemble the nickel containing metallocenter of UreC. The UreE protein probably delivers the nickel.

The protein resides in the cytoplasm. Functionally, required for maturation of urease via the functional incorporation of the urease nickel metallocenter. In Mycobacterium bovis (strain ATCC BAA-935 / AF2122/97), this protein is Urease accessory protein UreF.